Reading from the N-terminus, the 133-residue chain is p53 and DNA damage-regulated protein 1 (133 aa).

It belongs to the prefoldin subunit beta family. Component of the PAQosome complex which is responsible for the biogenesis of several protein complexes and which consists of R2TP complex members RUVBL1, RUVBL2, RPAP3 and PIH1D1, URI complex members PFDN2, PFDN6, PDRG1, UXT and URI1 as well as ASDURF, POLR2E and DNAAF10/WDR92.

The protein localises to the cytoplasm. Its function is as follows. May play a role in chaperone-mediated protein folding. This chain is p53 and DNA damage-regulated protein 1 (Pdrg1), found in Mus musculus (Mouse).